The following is a 176-amino-acid chain: Ribosome maturation factor RimM (176 aa).

Residues glutamate 97 to phenylalanine 176 form the PRC barrel domain.

The protein belongs to the RimM family. Binds ribosomal protein uS19.

It localises to the cytoplasm. Its function is as follows. An accessory protein needed during the final step in the assembly of 30S ribosomal subunit, possibly for assembly of the head region. Essential for efficient processing of 16S rRNA. May be needed both before and after RbfA during the maturation of 16S rRNA. It has affinity for free ribosomal 30S subunits but not for 70S ribosomes. This chain is Ribosome maturation factor RimM, found in Shewanella amazonensis (strain ATCC BAA-1098 / SB2B).